We begin with the raw amino-acid sequence, 254 residues long: 3-deoxy-manno-octulosonate cytidylyltransferase (254 aa).

This sequence belongs to the KdsB family.

The protein resides in the cytoplasm. It catalyses the reaction 3-deoxy-alpha-D-manno-oct-2-ulosonate + CTP = CMP-3-deoxy-beta-D-manno-octulosonate + diphosphate. Its pathway is nucleotide-sugar biosynthesis; CMP-3-deoxy-D-manno-octulosonate biosynthesis; CMP-3-deoxy-D-manno-octulosonate from 3-deoxy-D-manno-octulosonate and CTP: step 1/1. It participates in bacterial outer membrane biogenesis; lipopolysaccharide biosynthesis. Its function is as follows. Activates KDO (a required 8-carbon sugar) for incorporation into bacterial lipopolysaccharide in Gram-negative bacteria. The chain is 3-deoxy-manno-octulosonate cytidylyltransferase from Pseudomonas aeruginosa (strain UCBPP-PA14).